The primary structure comprises 248 residues: Probable transcriptional regulatory protein PLES_43501 (248 aa).

The protein belongs to the TACO1 family.

The protein localises to the cytoplasm. The chain is Probable transcriptional regulatory protein PLES_43501 from Pseudomonas aeruginosa (strain LESB58).